Here is a 370-residue protein sequence, read N- to C-terminus: MRSGRYIGVMSGTSLDGVDVVLAAIDEHTVAQQARYCHPIPQDIKMAILGMCQGQAVTLSALGQLDTRLGILFAEAVLTLLKETGLRAQGITAIGCHGQTVWHEPTGEAPCTLQIGDNNRVAALTGITTIGDFRRRDLAYGGQGAPLVPSFHHALLLHPVERRIVLNIGGIANLSLLVPGAPVRGYDTGPGNMLLDAWIWRHCAQPYDKDALWAINGQANPLLLRRMLTDPYFALRAPKSTGREYFNLGWLERMLAGLPPIAPQDVQATLVELTAISIADQVLLVGGCERLLVCGGGAHNPLIMARLSALLPGIEVSTTDECGVNGDDMEALAFAWLASRTLSGLPGNLPSVTGASQETVLGAIYPVNVD.

12-19 is a binding site for ATP; sequence GTSLDGVD.

It belongs to the anhydro-N-acetylmuramic acid kinase family.

It carries out the reaction 1,6-anhydro-N-acetyl-beta-muramate + ATP + H2O = N-acetyl-D-muramate 6-phosphate + ADP + H(+). It participates in amino-sugar metabolism; 1,6-anhydro-N-acetylmuramate degradation. The protein operates within cell wall biogenesis; peptidoglycan recycling. In terms of biological role, catalyzes the specific phosphorylation of 1,6-anhydro-N-acetylmuramic acid (anhMurNAc) with the simultaneous cleavage of the 1,6-anhydro ring, generating MurNAc-6-P. Is required for the utilization of anhMurNAc either imported from the medium or derived from its own cell wall murein, and thus plays a role in cell wall recycling. In Pectobacterium atrosepticum (strain SCRI 1043 / ATCC BAA-672) (Erwinia carotovora subsp. atroseptica), this protein is Anhydro-N-acetylmuramic acid kinase.